The sequence spans 602 residues: Elongation factor 4 (602 aa).

A tr-type G domain is found at 6 to 188 (DHIRNFSIVA…AIVNKLPAPK (183 aa)). GTP-binding positions include 18–23 (DHGKST) and 135–138 (NKID).

This sequence belongs to the TRAFAC class translation factor GTPase superfamily. Classic translation factor GTPase family. LepA subfamily.

It is found in the cell inner membrane. The enzyme catalyses GTP + H2O = GDP + phosphate + H(+). Functionally, required for accurate and efficient protein synthesis under certain stress conditions. May act as a fidelity factor of the translation reaction, by catalyzing a one-codon backward translocation of tRNAs on improperly translocated ribosomes. Back-translocation proceeds from a post-translocation (POST) complex to a pre-translocation (PRE) complex, thus giving elongation factor G a second chance to translocate the tRNAs correctly. Binds to ribosomes in a GTP-dependent manner. This is Elongation factor 4 from Brucella suis (strain ATCC 23445 / NCTC 10510).